The following is a 197-amino-acid chain: Protein GrpE (197 aa).

The interval 1 to 39 is disordered; that stretch reads MSSKEQKTPEGQAPEEIIMDQHEEIEAVEPEASAEQVDP.

It belongs to the GrpE family. As to quaternary structure, homodimer.

It localises to the cytoplasm. Participates actively in the response to hyperosmotic and heat shock by preventing the aggregation of stress-denatured proteins, in association with DnaK and GrpE. It is the nucleotide exchange factor for DnaK and may function as a thermosensor. Unfolded proteins bind initially to DnaJ; upon interaction with the DnaJ-bound protein, DnaK hydrolyzes its bound ATP, resulting in the formation of a stable complex. GrpE releases ADP from DnaK; ATP binding to DnaK triggers the release of the substrate protein, thus completing the reaction cycle. Several rounds of ATP-dependent interactions between DnaJ, DnaK and GrpE are required for fully efficient folding. This is Protein GrpE from Escherichia coli O157:H7 (strain EC4115 / EHEC).